A 226-amino-acid polypeptide reads, in one-letter code: MSSQTPVVTVDGPSGAGKGTLCMLLAKKLGFQLLDSGAIYRVLALAAIHHGVDTESEDALVPLATHLDVQFIAEGDLVKVILEGEDVSGELRKEETGMAASKVAALPRVREALLRRQRAFEAAPGLVADGRDMGTVVFPSAQAKIFLDASAEERANRRLKQLQDKGLDVRFADLLSEIQERDDRDRNRPVAPLRPAEDALVLDSTSMTIDEVVEKALQYIESKLAE.

ATP is bound at residue 12 to 20 (GPSGAGKGT).

Belongs to the cytidylate kinase family. Type 1 subfamily.

It localises to the cytoplasm. It catalyses the reaction CMP + ATP = CDP + ADP. The catalysed reaction is dCMP + ATP = dCDP + ADP. This Vibrio parahaemolyticus serotype O3:K6 (strain RIMD 2210633) protein is Cytidylate kinase.